Reading from the N-terminus, the 292-residue chain is Homoserine kinase (292 aa).

Position 84 to 94 (Pro-84 to Ala-94) interacts with ATP.

It belongs to the GHMP kinase family. Homoserine kinase subfamily.

The protein resides in the cytoplasm. It catalyses the reaction L-homoserine + ATP = O-phospho-L-homoserine + ADP + H(+). It participates in amino-acid biosynthesis; L-threonine biosynthesis; L-threonine from L-aspartate: step 4/5. Its function is as follows. Catalyzes the ATP-dependent phosphorylation of L-homoserine to L-homoserine phosphate. This chain is Homoserine kinase, found in Campylobacter jejuni subsp. jejuni serotype O:2 (strain ATCC 700819 / NCTC 11168).